The chain runs to 242 residues: Orotidine 5'-phosphate decarboxylase (242 aa).

Residues Asp16, Lys37, 64–73, Thr128, Arg190, Gln199, Gly219, and Arg220 contribute to the substrate site; that span reads DLKFHDIPNT. Residue Lys66 is the Proton donor of the active site.

It belongs to the OMP decarboxylase family. Type 1 subfamily. In terms of assembly, homodimer.

It carries out the reaction orotidine 5'-phosphate + H(+) = UMP + CO2. It functions in the pathway pyrimidine metabolism; UMP biosynthesis via de novo pathway; UMP from orotate: step 2/2. In terms of biological role, catalyzes the decarboxylation of orotidine 5'-monophosphate (OMP) to uridine 5'-monophosphate (UMP). The protein is Orotidine 5'-phosphate decarboxylase of Prochlorococcus marinus (strain AS9601).